Consider the following 364-residue polypeptide: uncharacterized protein (364 aa).

This is an uncharacterized protein from Saccharum officinarum (Sugarcane).